A 612-amino-acid polypeptide reads, in one-letter code: Phosphopentomutase (612 aa).

An N-acetylalanine modification is found at A2. 2 residues coordinate alpha-D-glucose 1,6-bisphosphate: R63 and S165. S165 acts as the Phosphoserine intermediate in catalysis. Residues S165, D322, D324, and D326 each coordinate Mg(2+). Phosphoserine is present on S165. Residues D326, R327, T400, E424, and K438 each coordinate alpha-D-glucose 1,6-bisphosphate.

It belongs to the phosphohexose mutase family. As to quaternary structure, monomer. It depends on Mg(2+) as a cofactor.

Its subcellular location is the cytoplasm. The protein resides in the cytosol. The enzyme catalyses alpha-D-ribose 1-phosphate = D-ribose 5-phosphate. It catalyses the reaction 2-deoxy-alpha-D-ribose 1-phosphate = 2-deoxy-D-ribose 5-phosphate. It carries out the reaction alpha-D-glucose 1-phosphate = alpha-D-glucose 6-phosphate. The catalysed reaction is O-phospho-L-seryl-[protein] + alpha-D-glucose 1-phosphate = alpha-D-glucose 1,6-bisphosphate + L-seryl-[protein]. The enzyme catalyses alpha-D-glucose 1,6-bisphosphate + L-seryl-[protein] = O-phospho-L-seryl-[protein] + alpha-D-glucose 6-phosphate. Its function is as follows. Catalyzes the conversion of the nucleoside breakdown products ribose-1-phosphate and deoxyribose-1-phosphate to the corresponding 5-phosphopentoses. Catalyzes the reversible isomerization of alpha-D-glucose 1-phosphate to alpha-D-glucose 6-phosphate but with a lower catalytic efficiency. The mechanism proceeds via the intermediate compound alpha-D-glucose 1,6-bisphosphate. In vitro, also has a low glucose 1,6-bisphosphate synthase activity which is most probably not physiologically relevant. The chain is Phosphopentomutase (PGM2) from Pongo abelii (Sumatran orangutan).